The primary structure comprises 418 residues: UDP-N-acetylglucosamine 1-carboxyvinyltransferase (418 aa).

A phosphoenolpyruvate-binding site is contributed by 23 to 24 (KN). UDP-N-acetyl-alpha-D-glucosamine is bound at residue R93. The active-site Proton donor is D117. Residues D305 and I327 each coordinate UDP-N-acetyl-alpha-D-glucosamine.

The protein belongs to the EPSP synthase family. MurA subfamily.

The protein localises to the cytoplasm. It catalyses the reaction phosphoenolpyruvate + UDP-N-acetyl-alpha-D-glucosamine = UDP-N-acetyl-3-O-(1-carboxyvinyl)-alpha-D-glucosamine + phosphate. It participates in cell wall biogenesis; peptidoglycan biosynthesis. Its function is as follows. Cell wall formation. Adds enolpyruvyl to UDP-N-acetylglucosamine. This is UDP-N-acetylglucosamine 1-carboxyvinyltransferase from Corynebacterium jeikeium (strain K411).